The sequence spans 125 residues: Cytochrome c' (125 aa).

Heme c is bound by residues Arg10, Glu67, Cys116, Cys119, and His120.

As to quaternary structure, homodimer. Post-translationally, binds 1 heme c group covalently per subunit.

In terms of biological role, cytochrome c' is the most widely occurring bacterial c-type cytochrome. Cytochromes c' are high-spin proteins and the heme has no sixth ligand. Their exact function is not known. This is Cytochrome c' from Pararhodospirillum photometricum (Rhodospirillum photometricum).